The primary structure comprises 606 residues: Elongation factor 4 (606 aa).

A tr-type G domain is found at 7-189 (SRIRNFCIIA…AVVDRVPPPK (183 aa)). Residues 19–24 (DHGKST) and 136–139 (NKID) contribute to the GTP site.

The protein belongs to the TRAFAC class translation factor GTPase superfamily. Classic translation factor GTPase family. LepA subfamily.

Its subcellular location is the cell inner membrane. The catalysed reaction is GTP + H2O = GDP + phosphate + H(+). Its function is as follows. Required for accurate and efficient protein synthesis under certain stress conditions. May act as a fidelity factor of the translation reaction, by catalyzing a one-codon backward translocation of tRNAs on improperly translocated ribosomes. Back-translocation proceeds from a post-translocation (POST) complex to a pre-translocation (PRE) complex, thus giving elongation factor G a second chance to translocate the tRNAs correctly. Binds to ribosomes in a GTP-dependent manner. The chain is Elongation factor 4 from Synechococcus sp. (strain CC9605).